Reading from the N-terminus, the 359-residue chain is Peptide chain release factor 1 (359 aa).

Gln235 carries the N5-methylglutamine modification. The tract at residues 280 to 306 is disordered; sequence AERQRADSERSADRKSQVGSGDRSERI.

This sequence belongs to the prokaryotic/mitochondrial release factor family. Methylated by PrmC. Methylation increases the termination efficiency of RF1.

The protein resides in the cytoplasm. Peptide chain release factor 1 directs the termination of translation in response to the peptide chain termination codons UAG and UAA. The protein is Peptide chain release factor 1 of Rhizobium leguminosarum bv. trifolii (strain WSM2304).